A 209-amino-acid polypeptide reads, in one-letter code: Uracil phosphoribosyltransferase (209 aa).

5-phospho-alpha-D-ribose 1-diphosphate-binding positions include Arg-79, Arg-104, and 131–139; that span reads DPMLATGNS. Uracil-binding positions include Ile-194 and 199–201; that span reads GDA. Residue Asp-200 coordinates 5-phospho-alpha-D-ribose 1-diphosphate.

Belongs to the UPRTase family. It depends on Mg(2+) as a cofactor.

It carries out the reaction UMP + diphosphate = 5-phospho-alpha-D-ribose 1-diphosphate + uracil. It participates in pyrimidine metabolism; UMP biosynthesis via salvage pathway; UMP from uracil: step 1/1. Its activity is regulated as follows. Allosterically activated by GTP. Catalyzes the conversion of uracil and 5-phospho-alpha-D-ribose 1-diphosphate (PRPP) to UMP and diphosphate. The protein is Uracil phosphoribosyltransferase of Agrobacterium fabrum (strain C58 / ATCC 33970) (Agrobacterium tumefaciens (strain C58)).